Consider the following 346-residue polypeptide: D-alanine--D-alanine ligase (346 aa).

In terms of domain architecture, ATP-grasp spans 133-327; that stretch reads KLYAKSVGVK…TLADQIPLEK (195 aa). 159-211 serves as a coordination point for ATP; that stretch reads LRFPCIIKPARLGSSIGISIVKDEKDLEYAKDVGFEFDNDLVVEEFKNNIKEY. Mg(2+) contacts are provided by aspartate 284, glutamate 296, and asparagine 298.

The protein belongs to the D-alanine--D-alanine ligase family. The cofactor is Mg(2+). Requires Mn(2+) as cofactor.

The protein localises to the cytoplasm. The enzyme catalyses 2 D-alanine + ATP = D-alanyl-D-alanine + ADP + phosphate + H(+). The protein operates within cell wall biogenesis; peptidoglycan biosynthesis. Its function is as follows. Cell wall formation. The chain is D-alanine--D-alanine ligase from Campylobacter jejuni subsp. doylei (strain ATCC BAA-1458 / RM4099 / 269.97).